The following is a 182-amino-acid chain: Chromophore lyase CpcS/CpeS (182 aa).

Belongs to the CpcS/CpeS biliprotein lyase family.

Covalently attaches a chromophore to Cys residue(s) of phycobiliproteins. The chain is Chromophore lyase CpcS/CpeS from Thermosynechococcus vestitus (strain NIES-2133 / IAM M-273 / BP-1).